Consider the following 81-residue polypeptide: Photosystem I iron-sulfur center (81 aa).

4Fe-4S ferredoxin-type domains follow at residues 2 to 31 and 37 to 68; these read SHAV…MVPW and GQIA…IRVY. The [4Fe-4S] cluster site is built by cysteine 11, cysteine 14, cysteine 17, cysteine 21, cysteine 48, cysteine 51, cysteine 54, and cysteine 58.

In terms of assembly, the cyanobacterial PSI reaction center is composed of one copy each of PsaA,B,C,D,E,F,I,J,K,L,M and X, and forms trimeric complexes. [4Fe-4S] cluster serves as cofactor.

Its subcellular location is the cellular thylakoid membrane. The catalysed reaction is reduced [plastocyanin] + hnu + oxidized [2Fe-2S]-[ferredoxin] = oxidized [plastocyanin] + reduced [2Fe-2S]-[ferredoxin]. Functionally, apoprotein for the two 4Fe-4S centers FA and FB of photosystem I (PSI); essential for photochemical activity. FB is the terminal electron acceptor of PSI, donating electrons to ferredoxin. The C-terminus interacts with PsaA/B/D and helps assemble the protein into the PSI complex. Required for binding of PsaD and PsaE to PSI. PSI is a plastocyanin/cytochrome c6-ferredoxin oxidoreductase, converting photonic excitation into a charge separation, which transfers an electron from the donor P700 chlorophyll pair to the spectroscopically characterized acceptors A0, A1, FX, FA and FB in turn. This is Photosystem I iron-sulfur center from Prochlorococcus marinus subsp. pastoris (strain CCMP1986 / NIES-2087 / MED4).